The primary structure comprises 200 residues: Ribonuclease HII (200 aa).

An RNase H type-2 domain is found at 14–200 (SRLAGVDEVG…FAPVKQWQLL (187 aa)). A divalent metal cation contacts are provided by Asp20, Glu21, and Asp112.

Belongs to the RNase HII family. It depends on Mn(2+) as a cofactor. Mg(2+) serves as cofactor.

It localises to the cytoplasm. It carries out the reaction Endonucleolytic cleavage to 5'-phosphomonoester.. In terms of biological role, endonuclease that specifically degrades the RNA of RNA-DNA hybrids. This Chromohalobacter salexigens (strain ATCC BAA-138 / DSM 3043 / CIP 106854 / NCIMB 13768 / 1H11) protein is Ribonuclease HII.